The chain runs to 202 residues: Ras-related protein Rab-18 (202 aa).

Residues serine 18, glycine 21, lysine 22, serine 23, serine 24, aspartate 35, proline 36, threonine 41, glycine 67, lysine 124, aspartate 126, and alanine 153 each contribute to the GTP site. The Effector region signature appears at 38-46; it reads QAATIGVDF. S-geranylgeranyl cysteine attachment occurs at residues cysteine 198 and cysteine 200.

It belongs to the small GTPase superfamily. Rab family.

It is found in the cell membrane. It catalyses the reaction GTP + H2O = GDP + phosphate + H(+). In terms of biological role, the small GTPases Rab are key regulators of intracellular membrane trafficking, from the formation of transport vesicles to their fusion with membranes. Rabs cycle between an inactive GDP-bound form and an active GTP-bound form that is able to recruit to membranes different sets of downstream effectors directly responsible for vesicle formation, movement, tethering and fusion. In Lymnaea stagnalis (Great pond snail), this protein is Ras-related protein Rab-18 (RAB18A).